Reading from the N-terminus, the 347-residue chain is NADH-ubiquinone oxidoreductase chain 2 (347 aa).

10 helical membrane-spanning segments follow: residues 3 to 23 (PPILIIILSTVISGTMIVLTS), 25 to 45 (HWLLTWIGFEMNMLAIIPILM), 59 to 79 (YFLTQATASMLLMMGIIINLL), 93 to 115 (MASTMMTIAMTMKLGLAPFHFWV), 149 to 169 (INTNLLMTMATMSVLIGGWGG), 178 to 198 (ILAYSSIAHMGWMVAIMTYNP), 200 to 220 (VMILNLMMYIMMTLTSFMLFI), 242 to 262 (SFILVLMLSLGGLPPLSGFIP), 274 to 294 (EMIILPTLLAITALLNLYFYM), and 323 to 343 (MALLPPLIIISTMLLPLTPMM).

Belongs to the complex I subunit 2 family. Core subunit of respiratory chain NADH dehydrogenase (Complex I) which is composed of 45 different subunits. Interacts with TMEM242.

The protein localises to the mitochondrion inner membrane. It carries out the reaction a ubiquinone + NADH + 5 H(+)(in) = a ubiquinol + NAD(+) + 4 H(+)(out). Functionally, core subunit of the mitochondrial membrane respiratory chain NADH dehydrogenase (Complex I) which catalyzes electron transfer from NADH through the respiratory chain, using ubiquinone as an electron acceptor. Essential for the catalytic activity and assembly of complex I. This is NADH-ubiquinone oxidoreductase chain 2 from Nandinia binotata (African palm civet).